Reading from the N-terminus, the 439-residue chain is Trigger factor (439 aa).

The PPIase FKBP-type domain occupies 163–248 (GDRVTIDYRG…LNKLEAPKLP (86 aa)).

This sequence belongs to the FKBP-type PPIase family. Tig subfamily.

It localises to the cytoplasm. It catalyses the reaction [protein]-peptidylproline (omega=180) = [protein]-peptidylproline (omega=0). Involved in protein export. Acts as a chaperone by maintaining the newly synthesized protein in an open conformation. Functions as a peptidyl-prolyl cis-trans isomerase. The polypeptide is Trigger factor (Nitrosomonas europaea (strain ATCC 19718 / CIP 103999 / KCTC 2705 / NBRC 14298)).